Here is a 116-residue protein sequence, read N- to C-terminus: MGSYLLNGFSPAMLASGHSVVFFNQIPDVMLCGALTSDELVNAIGHKSTINLINRICQTNLKENRIQVMLQDGDEAFIVVVTERLEEGKVLSDEEITKMFEDGKIKIYYARVHSVV.

This is an uncharacterized protein from Acidianus filamentous virus 1 (isolate United States/Yellowstone) (AFV-1).